The chain runs to 455 residues: Tryptophan dimethylallyltransferase (455 aa).

L-tryptophan contacts are provided by residues 79–80 and glutamate 88; that span reads VL. Positions 99, 186, and 188 each coordinate substrate. The L-tryptophan site is built by tyrosine 190 and arginine 256. Substrate contacts are provided by arginine 269, lysine 271, tyrosine 273, glutamine 355, tyrosine 357, tyrosine 421, and tyrosine 425.

Belongs to the tryptophan dimethylallyltransferase family. As to quaternary structure, homodimer.

The enzyme catalyses L-tryptophan + dimethylallyl diphosphate = 4-(3-methylbut-2-enyl)-L-tryptophan + diphosphate. The protein operates within alkaloid biosynthesis; ergot alkaloid biosynthesis. Its function is as follows. Tryptophan dimethylallyltransferase; part of the gene cluster that mediates the biosynthesis of fungal ergot alkaloid. DmaW catalyzes the first step of ergot alkaloid biosynthesis by condensing dimethylallyl diphosphate (DMAP) and tryptophan to form 4-dimethylallyl-L-tryptophan. The second step is catalyzed by the methyltransferase easF that methylates 4-dimethylallyl-L-tryptophan in the presence of S-adenosyl-L-methionine, resulting in the formation of 4-dimethylallyl-L-abrine. The catalase easC and the FAD-dependent oxidoreductase easE then transform 4-dimethylallyl-L-abrine to chanoclavine-I which is further oxidized by easD in the presence of NAD(+), resulting in the formation of chanoclavine-I aldehyde. Agroclavine dehydrogenase easG then mediates the conversion of chanoclavine-I aldehyde to agroclavine via a non-enzymatic adduct reaction: the substrate is an iminium intermediate that is formed spontaneously from chanoclavine-I aldehyde in the presence of glutathione. Further conversion of agroclavine to paspalic acid is a two-step process involving oxidation of agroclavine to elymoclavine and of elymoclavine to paspalic acid, the second step being performed by the elymoclavine oxidase cloA. However, cloA does not encode a functional enzyme indicating that C.fusiformis terminates its ergot alkaloid pathway at elymoclavine. This chain is Tryptophan dimethylallyltransferase, found in Claviceps fusiformis (Ergot fungus).